The chain runs to 585 residues: A-type ATP synthase subunit A (585 aa).

The disordered stretch occupies residues 192 to 211 (MRQEWPVREPRPTVEKKTPR). The segment covering 196–211 (WPVREPRPTVEKKTPR) has biased composition (basic and acidic residues). 237–244 (GPFGSGKT) is an ATP binding site.

It belongs to the ATPase alpha/beta chains family. Has multiple subunits with at least A(3), B(3), C, D, E, F, H, I and proteolipid K(x).

Its subcellular location is the cell membrane. It catalyses the reaction ATP + H2O + 4 H(+)(in) = ADP + phosphate + 5 H(+)(out). Its function is as follows. Component of the A-type ATP synthase that produces ATP from ADP in the presence of a proton gradient across the membrane. The A chain is the catalytic subunit. The sequence is that of A-type ATP synthase subunit A from Haloquadratum walsbyi (strain DSM 16790 / HBSQ001).